The following is a 133-amino-acid chain: Ribosome-binding factor A (133 aa).

It belongs to the RbfA family. Monomer. Binds 30S ribosomal subunits, but not 50S ribosomal subunits or 70S ribosomes.

Its subcellular location is the cytoplasm. Functionally, one of several proteins that assist in the late maturation steps of the functional core of the 30S ribosomal subunit. Associates with free 30S ribosomal subunits (but not with 30S subunits that are part of 70S ribosomes or polysomes). Required for efficient processing of 16S rRNA. May interact with the 5'-terminal helix region of 16S rRNA. The sequence is that of Ribosome-binding factor A from Synechocystis sp. (strain ATCC 27184 / PCC 6803 / Kazusa).